Reading from the N-terminus, the 158-residue chain is S-ribosylhomocysteine lyase (158 aa).

Histidine 54, histidine 58, and cysteine 124 together coordinate Fe cation.

The protein belongs to the LuxS family. In terms of assembly, homodimer. It depends on Fe cation as a cofactor.

It carries out the reaction S-(5-deoxy-D-ribos-5-yl)-L-homocysteine = (S)-4,5-dihydroxypentane-2,3-dione + L-homocysteine. Its function is as follows. Involved in the synthesis of autoinducer 2 (AI-2) which is secreted by bacteria and is used to communicate both the cell density and the metabolic potential of the environment. The regulation of gene expression in response to changes in cell density is called quorum sensing. Catalyzes the transformation of S-ribosylhomocysteine (RHC) to homocysteine (HC) and 4,5-dihydroxy-2,3-pentadione (DPD). This Lactobacillus johnsonii (strain CNCM I-12250 / La1 / NCC 533) protein is S-ribosylhomocysteine lyase.